Reading from the N-terminus, the 533-residue chain is Protein trichome birefringence-like 18 (533 aa).

A helical; Signal-anchor for type II membrane protein membrane pass occupies residues 21-41; the sequence is VSTVAIAIGGLASFFVFGLLL. Positions 93–171 are disordered; that stretch reads SDSSSGLPVV…PDDVSETASA (79 aa). The segment covering 113–154 has biased composition (basic and acidic residues); sequence SSDRKLETPLTQEKEDLVSSDITEKTDVQSGERETNVSKAED. A GDS motif motif is present at residues 248-250; that stretch reads GDS. The segment at 475 to 502 is disordered; the sequence is HDGHPGPFRSPDPNKITKRGPDGRPPPQ. A DCXHWCLPGXXDXWN motif motif is present at residues 503–517; it reads DCLHWCMPGPVDTWN.

It belongs to the PC-esterase family. TBL subfamily.

The protein resides in the membrane. Its function is as follows. May act as a bridging protein that binds pectin and other cell wall polysaccharides. Probably involved in maintaining esterification of pectins. May be involved in the specific O-acetylation of cell wall polymers. The protein is Protein trichome birefringence-like 18 (TBL18) of Arabidopsis thaliana (Mouse-ear cress).